The primary structure comprises 161 residues: MSIVTKSIVNADAEARYLSPGELDRIKAFVTSGESRLRIAETLTGSRERIIKSAGDALFQKRPDVVSPGGNAYGEEMTATCLRDMDYYLRLITYGVVAGDVTPIEEIGLVGVREMYKSLGTPVDAVAQAVREMKAVATGMMSGDDAAEAGAYFDYVIGAME.

(2R,3E)-phycocyanobilin is bound at residue C81.

This sequence belongs to the phycobiliprotein family. In terms of assembly, heterodimer of an alpha and a beta chain. Contains one covalently linked phycocyanobilin chromophore. The chromophore on position 81 is added by the phycocyanobilin lyase CpcUS.

It is found in the cellular thylakoid membrane. Light-harvesting photosynthetic bile pigment-protein from the phycobiliprotein complex. Allophycocyanin has a maximum absorption at approximately 650 nanometers. This Picosynechococcus sp. (strain ATCC 27264 / PCC 7002 / PR-6) (Agmenellum quadruplicatum) protein is Allophycocyanin alpha subunit (apcA).